The primary structure comprises 52 residues: Large ribosomal subunit protein bL33 (52 aa).

It belongs to the bacterial ribosomal protein bL33 family.

This is Large ribosomal subunit protein bL33 from Helicobacter acinonychis (strain Sheeba).